A 403-amino-acid chain; its full sequence is L-alanine/L-glutamate racemase (403 aa).

Pyridoxal 5'-phosphate contacts are provided by residues 62–64 (YSN), 92–93 (GL), and 209–211 (AVT). The residue at position 212 (K212) is an N6-(pyridoxal phosphate)lysine.

The protein belongs to the trans-sulfuration enzymes family. In terms of assembly, homotetramer; dimer of active dimers. It depends on pyridoxal 5'-phosphate as a cofactor.

The enzyme catalyses L-alanine = D-alanine. It carries out the reaction L-glutamate = D-glutamate. It catalyses the reaction L,L-cystathionine + H2O = L-homocysteine + pyruvate + NH4(+). Its pathway is cell wall biogenesis; peptidoglycan biosynthesis. Functionally, catalyzes the racemization of L-alanine to D-alanine, and of L-glutamate to D-glutamate. The activity is low, but likely physiological since W.pipientis wMel lacks canonical alr and murI genes, while D-alanine and D-glutamate are essential components of peptidoglycan. Also displays a vestigial cystathionine beta-lyase (CBL) activity, cleaving cystathionine to homocysteine and pyruvate; however, this reaction seems not to be physiologically relevant since the only met gene in the genome of this obligately intracellular parasitic bacterium is metC, demonstrating that it is a methionine auxotroph. The polypeptide is L-alanine/L-glutamate racemase (Wolbachia pipientis wMel).